A 136-amino-acid polypeptide reads, in one-letter code: Cytidine deaminase (136 aa).

In terms of domain architecture, CMP/dCMP-type deaminase spans methionine 1–glutamate 128. Position 42-44 (asparagine 42–glutamate 44) interacts with substrate. Residue cysteine 53 coordinates Zn(2+). The Proton donor role is filled by glutamate 55. Zn(2+) contacts are provided by cysteine 86 and cysteine 89.

Belongs to the cytidine and deoxycytidylate deaminase family. Homotetramer. It depends on Zn(2+) as a cofactor.

It carries out the reaction cytidine + H2O + H(+) = uridine + NH4(+). The enzyme catalyses 2'-deoxycytidine + H2O + H(+) = 2'-deoxyuridine + NH4(+). This enzyme scavenges exogenous and endogenous cytidine and 2'-deoxycytidine for UMP synthesis. This is Cytidine deaminase (cdd) from Bacillus subtilis (strain 168).